A 274-amino-acid polypeptide reads, in one-letter code: 2,3,4,5-tetrahydropyridine-2,6-dicarboxylate N-succinyltransferase (274 aa).

Substrate is bound by residues arginine 103 and aspartate 140.

The protein belongs to the transferase hexapeptide repeat family. As to quaternary structure, homotrimer.

Its subcellular location is the cytoplasm. It carries out the reaction (S)-2,3,4,5-tetrahydrodipicolinate + succinyl-CoA + H2O = (S)-2-succinylamino-6-oxoheptanedioate + CoA. It functions in the pathway amino-acid biosynthesis; L-lysine biosynthesis via DAP pathway; LL-2,6-diaminopimelate from (S)-tetrahydrodipicolinate (succinylase route): step 1/3. The chain is 2,3,4,5-tetrahydropyridine-2,6-dicarboxylate N-succinyltransferase from Haemophilus ducreyi (strain 35000HP / ATCC 700724).